The following is a 204-amino-acid chain: Ribonuclease HII (204 aa).

The RNase H type-2 domain maps to 17–204; the sequence is TLIAGVDEVG…KPVKKVLGLL (188 aa). The a divalent metal cation site is built by Asp-23, Glu-24, and Asp-115.

It belongs to the RNase HII family. Mn(2+) serves as cofactor. Mg(2+) is required as a cofactor.

It is found in the cytoplasm. It carries out the reaction Endonucleolytic cleavage to 5'-phosphomonoester.. Functionally, endonuclease that specifically degrades the RNA of RNA-DNA hybrids. This chain is Ribonuclease HII, found in Psychromonas ingrahamii (strain DSM 17664 / CCUG 51855 / 37).